Consider the following 188-residue polypeptide: Multiple organellar RNA editing factor 7, mitochondrial (188 aa).

Residues 1 to 20 (MARIIRRPLNLTAAVRFRLS) constitute a mitochondrion transit peptide. Positions 169-188 (DAKSGVVKKKHRRKRKKKLI) are disordered. Over residues 174 to 188 (VVKKKHRRKRKKKLI) the composition is skewed to basic residues.

The protein belongs to the MORF family. In terms of assembly, heterodimers with MORF8/RIP1, MORF5/RIP5 and MORF6/RIP6.

Its subcellular location is the mitochondrion. Its function is as follows. Involved in organellar RNA editing. Required for the processing of few RNA editing sites in mitochondria. The chain is Multiple organellar RNA editing factor 7, mitochondrial from Arabidopsis thaliana (Mouse-ear cress).